Here is a 425-residue protein sequence, read N- to C-terminus: Xylose isomerase (425 aa).

Active-site residues include His-101 and Asp-104. Residues Glu-232, Glu-268, His-271, Asp-296, Asp-307, Asp-309, and Asp-339 each contribute to the Mg(2+) site.

It belongs to the xylose isomerase family. In terms of assembly, homotetramer. The cofactor is Mg(2+).

The protein localises to the cytoplasm. The catalysed reaction is alpha-D-xylose = alpha-D-xylulofuranose. The sequence is that of Xylose isomerase from Salmonella paratyphi A (strain ATCC 9150 / SARB42).